Consider the following 232-residue polypeptide: Thiamine import ATP-binding protein ThiQ (232 aa).

The ABC transporter domain maps to 2–230 (LKLTDITWLY…KASASALLGI (229 aa)). 32–39 (GPSGAGKS) contributes to the ATP binding site.

This sequence belongs to the ABC transporter superfamily. Thiamine importer (TC 3.A.1.19.1) family. The complex is composed of two ATP-binding proteins (ThiQ), two transmembrane proteins (ThiP) and a solute-binding protein (ThiB).

It localises to the cell inner membrane. The catalysed reaction is thiamine(out) + ATP + H2O = thiamine(in) + ADP + phosphate + H(+). Functionally, part of the ABC transporter complex ThiBPQ involved in thiamine import. Responsible for energy coupling to the transport system. This Escherichia coli (strain K12) protein is Thiamine import ATP-binding protein ThiQ.